The primary structure comprises 538 residues: Bifunctional purine biosynthesis protein PurH (538 aa).

Residues 6–158 (KHIPAPDLHR…KNHAYVATVV (153 aa)) enclose the MGS-like domain.

Belongs to the PurH family.

The enzyme catalyses (6R)-10-formyltetrahydrofolate + 5-amino-1-(5-phospho-beta-D-ribosyl)imidazole-4-carboxamide = 5-formamido-1-(5-phospho-D-ribosyl)imidazole-4-carboxamide + (6S)-5,6,7,8-tetrahydrofolate. It catalyses the reaction IMP + H2O = 5-formamido-1-(5-phospho-D-ribosyl)imidazole-4-carboxamide. The protein operates within purine metabolism; IMP biosynthesis via de novo pathway; 5-formamido-1-(5-phospho-D-ribosyl)imidazole-4-carboxamide from 5-amino-1-(5-phospho-D-ribosyl)imidazole-4-carboxamide (10-formyl THF route): step 1/1. It functions in the pathway purine metabolism; IMP biosynthesis via de novo pathway; IMP from 5-formamido-1-(5-phospho-D-ribosyl)imidazole-4-carboxamide: step 1/1. The chain is Bifunctional purine biosynthesis protein PurH from Brucella abortus (strain S19).